We begin with the raw amino-acid sequence, 374 residues long: Transcription factor IIIA (374 aa).

7 C2H2-type zinc fingers span residues 23–47, 53–77, 83–107, 113–138, 144–169, 204–226, and 236–261; these read FHCP…LRTH, FVCD…KRCH, FSCH…IEVH, YACT…SACH, YPCT…NRAH, PSCS…VVLH, and YHCP…SVIH. Residues 267–291 form a C2H2-type 8; atypical zinc finger; it reads FHCDSCGTKFGYKHMLQRHLERGTC. The segment at 349–374 adopts a C2H2-type 9 zinc-finger fold; it reads YSCSFPECNYRFKRLYDMHRHLNSHH.

The protein resides in the nucleus. In terms of biological role, is required for correct transcription of 5S RNA genes by RNA polymerase III. Also binds the transcribed 5S RNA's. Initiates transcription of the 5S ribosomal RNA gene. In Schizosaccharomyces pombe (strain 972 / ATCC 24843) (Fission yeast), this protein is Transcription factor IIIA (sfc2).